The sequence spans 790 residues: Endonuclease MutS2 (790 aa).

334 to 341 (GPNTGGKT) serves as a coordination point for ATP. Positions 715–790 (IDVRGQNLEE…GMGVTIVHLK (76 aa)) constitute a Smr domain.

It belongs to the DNA mismatch repair MutS family. MutS2 subfamily. In terms of assembly, homodimer. Binds to stalled ribosomes, contacting rRNA.

Functionally, endonuclease that is involved in the suppression of homologous recombination and thus may have a key role in the control of bacterial genetic diversity. In terms of biological role, acts as a ribosome collision sensor, splitting the ribosome into its 2 subunits. Detects stalled/collided 70S ribosomes which it binds and splits by an ATP-hydrolysis driven conformational change. Acts upstream of the ribosome quality control system (RQC), a ribosome-associated complex that mediates the extraction of incompletely synthesized nascent chains from stalled ribosomes and their subsequent degradation. Probably generates substrates for RQC. The polypeptide is Endonuclease MutS2 (Alkaliphilus oremlandii (strain OhILAs) (Clostridium oremlandii (strain OhILAs))).